We begin with the raw amino-acid sequence, 222 residues long: Glutathione S-transferase A2 (222 aa).

An N-acetylalanine modification is found at Ala2. Residues 3-83 (GKPVLHYFNA…YIATKYDLYG (81 aa)) form the GST N-terminal domain. An N6-succinyllysine modification is found at Lys4. Glutathione-binding positions include Tyr9, Lys45, 54 to 55 (QV), and 67 to 68 (QT). The GST C-terminal domain maps to 85-208 (DMKERALIDM…HPGSQRKPPL (124 aa)).

It belongs to the GST superfamily. Alpha family. In terms of assembly, homodimer. Heterodimer of GSTA1 and GSTA2. As to expression, expressed in the kidney.

It catalyses the reaction RX + glutathione = an S-substituted glutathione + a halide anion + H(+). In terms of biological role, catalyzes the conjugation of glutathione to a large variety of electrophilic compounds. The protein is Glutathione S-transferase A2 (Gsta2) of Mus musculus (Mouse).